The sequence spans 362 residues: Holliday junction branch migration complex subunit RuvB (362 aa).

Residues 1–27 (MANIEKTEFHVPAPVSAAGNQKSSLGN) are disordered. The tract at residues 13–206 (APVSAAGNQK…FGFTAQMEFY (194 aa)) is large ATPase domain (RuvB-L). ATP contacts are provided by residues Leu-45, Arg-46, Gly-87, Lys-90, Thr-91, Thr-92, 153–155 (EDF), Arg-196, Tyr-206, and Arg-243. Thr-91 serves as a coordination point for Mg(2+). Residues 207–277 (EVEDLTKVVV…AAQAALVVFD (71 aa)) are small ATPAse domain (RuvB-S). The interval 280-362 (EMGLDRLDRA…EPPEGIIGSL (83 aa)) is head domain (RuvB-H). DNA is bound by residues Arg-335 and Arg-340.

It belongs to the RuvB family. Homohexamer. Forms an RuvA(8)-RuvB(12)-Holliday junction (HJ) complex. HJ DNA is sandwiched between 2 RuvA tetramers; dsDNA enters through RuvA and exits via RuvB. An RuvB hexamer assembles on each DNA strand where it exits the tetramer. Each RuvB hexamer is contacted by two RuvA subunits (via domain III) on 2 adjacent RuvB subunits; this complex drives branch migration. In the full resolvosome a probable DNA-RuvA(4)-RuvB(12)-RuvC(2) complex forms which resolves the HJ.

Its subcellular location is the cytoplasm. The enzyme catalyses ATP + H2O = ADP + phosphate + H(+). Functionally, the RuvA-RuvB-RuvC complex processes Holliday junction (HJ) DNA during genetic recombination and DNA repair, while the RuvA-RuvB complex plays an important role in the rescue of blocked DNA replication forks via replication fork reversal (RFR). RuvA specifically binds to HJ cruciform DNA, conferring on it an open structure. The RuvB hexamer acts as an ATP-dependent pump, pulling dsDNA into and through the RuvAB complex. RuvB forms 2 homohexamers on either side of HJ DNA bound by 1 or 2 RuvA tetramers; 4 subunits per hexamer contact DNA at a time. Coordinated motions by a converter formed by DNA-disengaged RuvB subunits stimulates ATP hydrolysis and nucleotide exchange. Immobilization of the converter enables RuvB to convert the ATP-contained energy into a lever motion, pulling 2 nucleotides of DNA out of the RuvA tetramer per ATP hydrolyzed, thus driving DNA branch migration. The RuvB motors rotate together with the DNA substrate, which together with the progressing nucleotide cycle form the mechanistic basis for DNA recombination by continuous HJ branch migration. Branch migration allows RuvC to scan DNA until it finds its consensus sequence, where it cleaves and resolves cruciform DNA. This Corynebacterium diphtheriae (strain ATCC 700971 / NCTC 13129 / Biotype gravis) protein is Holliday junction branch migration complex subunit RuvB.